The sequence spans 423 residues: UDP-N-acetylglucosamine 1-carboxyvinyltransferase 1 (423 aa).

A phosphoenolpyruvate-binding site is contributed by 23–24; the sequence is KN. Arg-96 serves as a coordination point for UDP-N-acetyl-alpha-D-glucosamine. Cys-120 serves as the catalytic Proton donor. 2-(S-cysteinyl)pyruvic acid O-phosphothioketal is present on Cys-120. 2 residues coordinate UDP-N-acetyl-alpha-D-glucosamine: Asp-309 and Val-331.

The protein belongs to the EPSP synthase family. MurA subfamily.

The protein localises to the cytoplasm. It catalyses the reaction phosphoenolpyruvate + UDP-N-acetyl-alpha-D-glucosamine = UDP-N-acetyl-3-O-(1-carboxyvinyl)-alpha-D-glucosamine + phosphate. It functions in the pathway cell wall biogenesis; peptidoglycan biosynthesis. In terms of biological role, cell wall formation. Adds enolpyruvyl to UDP-N-acetylglucosamine. This is UDP-N-acetylglucosamine 1-carboxyvinyltransferase 1 from Streptococcus pyogenes serotype M1.